Here is a 305-residue protein sequence, read N- to C-terminus: Suppressor of activated egl-4 protein 2 (305 aa).

The disordered stretch occupies residues 138 to 168; that stretch reads KRGYESDSSDVSGVSHCSDAKRRRGRPRKDE. The a.T hook DNA-binding region spans 158–170; sequence KRRRGRPRKDEEA.

Interacts with phosphorylated egl-4. May interact with itself. May be a component of a histone deacetylase complex containing saeg-2, saeg-1 and hda-2. In terms of tissue distribution, ubiquitously expressed.

Its subcellular location is the nucleus. Its function is as follows. As a likely component of a histone deacetylase complex, together with saeg-1 and hda-2, functions downstream of the cAMP-dependent kinase egl-4 to regulate the expression of genes required for egg-laying and foraging. The sequence is that of Suppressor of activated egl-4 protein 2 from Caenorhabditis elegans.